The sequence spans 90 residues: Large ribosomal subunit protein eL37 (90 aa).

Cysteine 19, cysteine 22, cysteine 34, and cysteine 37 together coordinate Zn(2+). A C4-type zinc finger spans residues 19-37; it reads CRRCGRQSYHKQKNSCSSC. Positions 21–31 are enriched in basic residues; it reads RCGRQSYHKQK. The tract at residues 21–59 is disordered; that stretch reads RCGRQSYHKQKNSCSSCGYPNPKMRNPGSIKARRRRTIG.

It belongs to the eukaryotic ribosomal protein eL37 family. Zn(2+) serves as cofactor.

Its function is as follows. Binds to the 23S rRNA. The polypeptide is Large ribosomal subunit protein eL37 (RPL37) (Encephalitozoon cuniculi (strain GB-M1) (Microsporidian parasite)).